We begin with the raw amino-acid sequence, 181 residues long: RNA-binding protein (181 aa).

The segment at 106-181 (FLTSVNPGES…DANTRKSKRK (76 aa)) is disordered. The segment covering 141–157 (RNSKKGAKKSSSARKKK) has biased composition (basic residues). A compositionally biased stretch (low complexity) spans 160-172 (SSNSETDLSSDSD).

It belongs to the phytoreovirus RNA-binding protein family.

The protein resides in the host cytoplasm. In terms of biological role, constituent of viral factories. Binds to ssRNA and dsRNA. The sequence is that of RNA-binding protein from Rice dwarf virus (isolate Akita) (RDV).